The following is a 637-amino-acid chain: Nucleoside triphosphatase I (637 aa).

A Helicase ATP-binding domain is found at 43 to 205; that stretch reads FLGLNSMNSI…QMLVNLLRPG (163 aa). 56-63 serves as a coordination point for ATP; that stretch reads QETGVGKT. A DEXH box motif is present at residues 142–145; the sequence is DECH. The Helicase C-terminal domain maps to 358 to 537; the sequence is ELYNYLYEHS…QLYKVFKHSS (180 aa). Positions 459–526 are binding to the cap-specific mRNA (nucleoside-2'-O-)-methyltransferase; it reads DIFILDMTWN…DIIQSKSKEF (68 aa).

This sequence belongs to the helicase family. NPH I subfamily. In terms of assembly, monomer. Interacts (via C-terminus) with RAP94 (via N-terminus). Interacts with the cap-specific mRNA (nucleoside-2'-O-)-methyltransferase.

The protein resides in the virion. It catalyses the reaction a ribonucleoside 5'-triphosphate + H2O = a ribonucleoside 5'-diphosphate + phosphate + H(+). In terms of biological role, DNA-dependent ATPase required for providing the needed energy to achieve the termination of early transcripts. Acts in concert with the RAP94 subunit of the virion RNA polymerase and the capping enzyme/VTF to catalyze release of UUUUUNU-containing nascent RNA from the elongation complex. NPH-I must bind ssDNA in order to exhibit ATPase activity. This is Nucleoside triphosphatase I (NPH1) from Vertebrata (FPV).